The chain runs to 385 residues: Chaperone protein DnaJ (385 aa).

One can recognise a J domain in the interval 5–70 (DYYEVLGVAK…QKRAAYDRFG (66 aa)). The segment at 141 to 219 (GKTETIRIPT…CSGAGRVNRE (79 aa)) adopts a CR-type zinc-finger fold. Residues cysteine 154, cysteine 157, cysteine 171, cysteine 174, cysteine 193, cysteine 196, cysteine 207, and cysteine 210 each contribute to the Zn(2+) site. CXXCXGXG motif repeat units follow at residues 154–161 (CETCSGTG), 171–178 (CSTCGGYG), 193–200 (CPNCHGRG), and 207–214 (CTACSGAG).

It belongs to the DnaJ family. Homodimer. Requires Zn(2+) as cofactor.

The protein resides in the cytoplasm. In terms of biological role, participates actively in the response to hyperosmotic and heat shock by preventing the aggregation of stress-denatured proteins and by disaggregating proteins, also in an autonomous, DnaK-independent fashion. Unfolded proteins bind initially to DnaJ; upon interaction with the DnaJ-bound protein, DnaK hydrolyzes its bound ATP, resulting in the formation of a stable complex. GrpE releases ADP from DnaK; ATP binding to DnaK triggers the release of the substrate protein, thus completing the reaction cycle. Several rounds of ATP-dependent interactions between DnaJ, DnaK and GrpE are required for fully efficient folding. Also involved, together with DnaK and GrpE, in the DNA replication of plasmids through activation of initiation proteins. The chain is Chaperone protein DnaJ from Methylorubrum extorquens (strain PA1) (Methylobacterium extorquens).